Consider the following 260-residue polypeptide: Pro-thyrotropin-releasing hormone (260 aa).

A signal peptide spans 1–24 (MPSIQLPVLLLCLTLSGVCLNGRQ). Residues 72–112 (PQWLSKRQHPGKRYISDPEKRQHPGKRDVEEKASFGDIQKR) form a disordered region. At glutamine 79 the chain carries Pyrrolidone carboxylic acid. Proline 81 bears the Proline amide mark. Positions 85-112 (YISDPEKRQHPGKRDVEEKASFGDIQKR) are enriched in basic and acidic residues. Glutamine 93 is subject to Pyrrolidone carboxylic acid. Position 95 is a proline amide (proline 95). A Pyrrolidone carboxylic acid modification is found at glutamine 113. Leucine 115 is modified (leucine amide). The residue at position 134 (glutamine 134) is a Pyrrolidone carboxylic acid. The residue at position 136 (proline 136) is a Proline amide. Residue glutamine 163 is modified to Pyrrolidone carboxylic acid. Residue proline 165 is modified to Proline amide. Residues 195 to 207 (KHQQFGNRDRDSD) show a composition bias toward basic and acidic residues. Disordered stretches follow at residues 195–217 (KHQQ…PCDL) and 238–260 (KEGV…ETEE). Residue glutamine 246 is modified to Pyrrolidone carboxylic acid. Proline 248 is subject to Proline amide.

This sequence belongs to the TRH family.

Its subcellular location is the secreted. Its function is as follows. Functions as a regulator of the biosynthesis of TSH in the anterior pituitary gland and as a neurotransmitter/ neuromodulator in the central and peripheral nervous systems. In Gallus gallus (Chicken), this protein is Pro-thyrotropin-releasing hormone (TRH).